Here is a 268-residue protein sequence, read N- to C-terminus: Enoyl-[acyl-carrier-protein] reductase [NADH] 2 (268 aa).

NAD(+)-binding positions include Gly14, 20 to 21 (SI), Gln41, 65 to 66 (DV), and Ile93. Catalysis depends on proton acceptor residues Tyr146 and Tyr156. NAD(+)-binding positions include Lys163 and 192-196 (IRTLA).

Belongs to the short-chain dehydrogenases/reductases (SDR) family. FabI subfamily.

It is found in the cell inner membrane. It carries out the reaction a 2,3-saturated acyl-[ACP] + NAD(+) = a (2E)-enoyl-[ACP] + NADH + H(+). Its pathway is lipid metabolism; fatty acid biosynthesis. In Rhizobium meliloti (strain 1021) (Ensifer meliloti), this protein is Enoyl-[acyl-carrier-protein] reductase [NADH] 2 (fabI2).